A 70-amino-acid chain; its full sequence is Small ribosomal subunit protein bS21 (70 aa).

Belongs to the bacterial ribosomal protein bS21 family.

This is Small ribosomal subunit protein bS21 from Nitrosomonas eutropha (strain DSM 101675 / C91 / Nm57).